A 689-amino-acid chain; its full sequence is Glycine--tRNA ligase beta subunit (689 aa).

This sequence belongs to the class-II aminoacyl-tRNA synthetase family. As to quaternary structure, tetramer of two alpha and two beta subunits.

It is found in the cytoplasm. The catalysed reaction is tRNA(Gly) + glycine + ATP = glycyl-tRNA(Gly) + AMP + diphosphate. This chain is Glycine--tRNA ligase beta subunit, found in Shewanella pealeana (strain ATCC 700345 / ANG-SQ1).